The sequence spans 611 residues: Chaperone protein DnaK (611 aa).

Thr173 carries the phosphothreonine; by autocatalysis modification. Disordered stretches follow at residues Asp525–Gly548 and Tyr573–Lys611. Basic and acidic residues predominate over residues Glu529–Leu542. The span at Gln574 to Gln591 shows a compositional bias: low complexity. Residues Ala599–Lys611 show a composition bias toward basic and acidic residues.

The protein belongs to the heat shock protein 70 family.

Acts as a chaperone. The sequence is that of Chaperone protein DnaK from Staphylococcus haemolyticus (strain JCSC1435).